A 205-amino-acid polypeptide reads, in one-letter code: Guanylate kinase (205 aa).

The region spanning 7–185 (GNIFIISAAS…AEEDLRHIVN (179 aa)) is the Guanylate kinase-like domain. An ATP-binding site is contributed by 14–21 (AASGTGKT).

It belongs to the guanylate kinase family.

The protein resides in the cytoplasm. The catalysed reaction is GMP + ATP = GDP + ADP. Essential for recycling GMP and indirectly, cGMP. The protein is Guanylate kinase (gmk) of Neisseria meningitidis serogroup B (strain ATCC BAA-335 / MC58).